We begin with the raw amino-acid sequence, 1050 residues long: Integrin alpha-5 (1050 aa).

An N-terminal signal peptide occupies residues Met-1–Gly-32. The Extracellular portion of the chain corresponds to Phe-33–Tyr-996. 7 FG-GAP repeats span residues Asn-34–Cys-99, Asp-116–Thr-175, Arg-183–Tyr-235, Gln-249–Leu-301, Arg-302–Thr-367, Pro-368–Ser-426, and Gln-430–Asn-493. N-linked (GlcNAc...) asparagine glycans are attached at residues Asn-75, Asn-95, and Asn-98. Disulfide bonds link Cys-90/Cys-99 and Cys-145/Cys-166. A glycan (N-linked (GlcNAc...) asparagine) is linked at Asn-172. Cys-182 and Cys-195 are joined by a disulfide. The Ca(2+) site is built by Glu-270, Ser-272, Asp-274, Thr-276, and Asp-278. N-linked (GlcNAc...) asparagine glycans are attached at residues Asn-287, Asn-297, and Asn-306. Ca(2+) is bound by residues Asp-324, Asn-326, Asp-328, Leu-330, Asp-332, Asp-390, Asp-392, Asp-394, Asp-398, Asp-454, Asp-456, Asn-458, Tyr-460, and Asp-462. A disulfide bridge links Cys-502 with Cys-513. Residues Asn-507, Asn-515, Asn-521, and Asn-600 are each glycosylated (N-linked (GlcNAc...) asparagine). Cys-519 and Cys-575 are disulfide-bonded. Residues Cys-636 and Cys-642 are joined by a disulfide bond. N-linked (GlcNAc...) asparagine glycans are attached at residues Asn-649, Asn-714, Asn-763, and Asn-861. An intrachain disulfide couples Cys-708 to Cys-721. 3 cysteine pairs are disulfide-bonded: Cys-839-Cys-958, Cys-862-Cys-922, and Cys-910-Cys-917. A helical membrane pass occupies residues Gly-997–Tyr-1022. Residues Lys-1023–Ala-1050 lie on the Cytoplasmic side of the membrane. The short motif at Gly-1025–Arg-1029 is the GFFKR motif element.

The protein belongs to the integrin alpha chain family. As to quaternary structure, heterodimer of an alpha and a beta subunit. The alpha subunit is composed of a heavy and a light chain linked by a disulfide bond. Alpha-5 associates with beta-1.

The protein resides in the cell membrane. It is found in the cell junction. Its subcellular location is the focal adhesion. In terms of biological role, integrin alpha-5/beta-1 (ITGA5:ITGB1) is a receptor for fibronectin. It recognizes the sequence R-G-D in its ligands. ITGA5:ITGB1 acts as a receptor for fibrillin-1 (FBN1) and mediates R-G-D-dependent cell adhesion to FBN1. ITGA5:ITGB1 acts as a receptor for fibronectin (FN1) and mediates R-G-D-dependent cell adhesion to FN1. ITGA5:ITGB1 is a receptor for IL1B and binding is essential for IL1B signaling. ITGA5:ITGB3 is a receptor for soluble CD40LG and is required for CD40/CD40LG signaling. The polypeptide is Integrin alpha-5 (itga5) (Xenopus laevis (African clawed frog)).